Reading from the N-terminus, the 461-residue chain is Fumarate hydratase class II (461 aa).

Substrate-binding positions include 97–99 (SGT), 127–130 (HPND), 137–139 (SSN), and threonine 185. Histidine 186 functions as the Proton donor/acceptor in the catalytic mechanism. Residue serine 316 is part of the active site. Substrate-binding positions include serine 317 and 322–324 (KVN).

The protein belongs to the class-II fumarase/aspartase family. Fumarase subfamily. In terms of assembly, homotetramer.

The protein resides in the cytoplasm. It catalyses the reaction (S)-malate = fumarate + H2O. The protein operates within carbohydrate metabolism; tricarboxylic acid cycle; (S)-malate from fumarate: step 1/1. In terms of biological role, involved in the TCA cycle. Catalyzes the stereospecific interconversion of fumarate to L-malate. This is Fumarate hydratase class II from Staphylococcus aureus (strain MRSA252).